A 223-amino-acid chain; its full sequence is Deoxyribose-phosphate aldolase (223 aa).

The Proton donor/acceptor role is filled by aspartate 91. Lysine 153 serves as the catalytic Schiff-base intermediate with acetaldehyde. The active-site Proton donor/acceptor is the lysine 182.

The protein belongs to the DeoC/FbaB aldolase family. DeoC type 1 subfamily.

Its subcellular location is the cytoplasm. It carries out the reaction 2-deoxy-D-ribose 5-phosphate = D-glyceraldehyde 3-phosphate + acetaldehyde. It participates in carbohydrate degradation; 2-deoxy-D-ribose 1-phosphate degradation; D-glyceraldehyde 3-phosphate and acetaldehyde from 2-deoxy-alpha-D-ribose 1-phosphate: step 2/2. Its function is as follows. Catalyzes a reversible aldol reaction between acetaldehyde and D-glyceraldehyde 3-phosphate to generate 2-deoxy-D-ribose 5-phosphate. In Yersinia pestis bv. Antiqua (strain Angola), this protein is Deoxyribose-phosphate aldolase.